Here is a 261-residue protein sequence, read N- to C-terminus: Vacuolar iron transporter (261 aa).

The chain crosses the membrane as a helical span at residues 66–86 (GQVLIAALAALFAGALSMAVG). Positions 105, 108, 116, 119, and 154 each coordinate Fe cation. Helical transmembrane passes span 170–190 (MVSF…GAWI), 197–217 (IGAI…VGAF), and 233–253 (GGAL…TLNI).

The protein belongs to the CCC1 family.

Its subcellular location is the vacuole membrane. The enzyme catalyses Fe(2+)(in) = Fe(2+)(out). In terms of biological role, vacuolar iron transporter involved in the transfer of iron ions from the cytosol to the vacuole for intracellular iron storage. This is Vacuolar iron transporter from Acanthamoeba castellanii (strain ATCC 30010 / Neff).